Reading from the N-terminus, the 298-residue chain is Serine/threonine-protein kinase 1 (298 aa).

Residues 38 to 276 (FIATRPMFEG…FKSLVSHPWF (239 aa)) enclose the Protein kinase domain. Residues 45 to 53 (FEGGRNNVF) and lysine 65 each bind ATP. The active-site Proton acceptor is the aspartate 152.

This sequence belongs to the protein kinase superfamily. Ser/Thr protein kinase family.

The protein resides in the virion. It localises to the host cytoplasm. It catalyses the reaction L-seryl-[protein] + ATP = O-phospho-L-seryl-[protein] + ADP + H(+). The catalysed reaction is L-threonyl-[protein] + ATP = O-phospho-L-threonyl-[protein] + ADP + H(+). In terms of biological role, essential for viral replication. It may mediate the virus' progression through DNA replication. This Ornithodoros (relapsing fever ticks) protein is Serine/threonine-protein kinase 1.